A 433-amino-acid chain; its full sequence is GTPase Der (433 aa).

2 consecutive EngA-type G domains span residues 5-167 (KKVL…GEVG) and 174-349 (IKVG…DQLE). GTP contacts are provided by residues 11-18 (GRPNVGKS), 58-62 (DTGGF), 119-122 (NKVD), 180-187 (GKPNSGKS), 227-231 (DTAGI), and 292-295 (SKWD). The 81-residue stretch at 349–429 (ELKTSTPDLN…PILVELKEKI (81 aa)) folds into the KH-like domain.

The protein belongs to the TRAFAC class TrmE-Era-EngA-EngB-Septin-like GTPase superfamily. EngA (Der) GTPase family. Associates with the 50S ribosomal subunit.

GTPase that plays an essential role in the late steps of ribosome biogenesis. The protein is GTPase Der of Borreliella burgdorferi (strain ATCC 35210 / DSM 4680 / CIP 102532 / B31) (Borrelia burgdorferi).